Consider the following 401-residue polypeptide: MNVFNPAQFRAQFPALQDAGVYLDSAATALKPEAVVEATQQFYSLSAGNVHRSQFAEAQRLTARYEAAREKVAQLLNAPDDKTIVWTRGTTESINMVAQCYARPRLQPGDEIIVSVAEHHANLVPWLMVAQQTGAKVVKLPLNAQRLPDVDLLPELITPRSRILALGQMSNVTGGCPDLARAITFAHSAGMVVMVDGAQGAVHFPADVQQLDIDFYAFSGHKLYGPTGIGVLYGKSELLEAMSPWLGGGKMVHEVSFDGFTTQSAPWKLEAGTPNVAGVIGLSAALEWLADYDINQAESWSRSLATLAEDALAKRPGFRSFRCQDSSLLAFDFAGVHHSDMVTLLAEYGIALRAGQHCAQPLLAELGVTGTLRASFAPYNTKSDVDALVNAVDRALELLVD.

Lys-222 is modified (N6-(pyridoxal phosphate)lysine). The Cysteine persulfide intermediate role is filled by Cys-358.

The protein belongs to the class-V pyridoxal-phosphate-dependent aminotransferase family. Csd subfamily. As to quaternary structure, homodimer. Forms a heterodimer with CsdE. Pyridoxal 5'-phosphate is required as a cofactor.

The enzyme catalyses (sulfur carrier)-H + L-cysteine = (sulfur carrier)-SH + L-alanine. The catalysed reaction is L-selenocysteine + AH2 = hydrogenselenide + L-alanine + A + H(+). It catalyses the reaction 3-sulfino-L-alanine + H2O = sulfite + L-alanine + H(+). Its activity is regulated as follows. Cysteine desulfurase activity is increased 2-fold in the presence of CsdE. Catalyzes the removal of elemental sulfur and selenium atoms from L-cysteine, L-cystine, L-selenocysteine, and L-selenocystine to produce L-alanine, and transiently retains the released sulfur atom on a cysteine residue, in the form of a persulfide. Can also desulfinate L-cysteine sulfinate (3-sulfino-L-alanine), which is the best substrate of the enzyme. Functions as a selenium delivery protein in the pathway for the biosynthesis of selenophosphate. Seems to participate in Fe/S biogenesis by recruiting the SufBCD-SufE proteins. Transfers sulfur to CsdE that increases the cysteine desulfurase activity of CsdA. Can also transfer sulfur directly to TcdA/CsdL in vitro. Appears to support the function of TcdA in the generation of cyclic threonylcarbamoyladenosine at position 37 (ct(6)A37) in tRNAs that read codons beginning with adenine. In Escherichia coli (strain K12), this protein is Cysteine desulfurase CsdA (csdA).